A 132-amino-acid chain; its full sequence is MSDIPPDLHYTAEHEWVRRSGDDTVRVGITDFAQSALGDVVFVQLPEVGAQLTAGESFGEVESTKSVSDLYAPVSGTVTAVNTDLEGSPQLVNSDPYGAGWLLDVQVSDAAALESAITALLDAEAYRGTLTE.

A Lipoyl-binding domain is found at 24-106 (TVRVGITDFA…YGAGWLLDVQ (83 aa)). The residue at position 65 (K65) is an N6-lipoyllysine.

The protein belongs to the GcvH family. As to quaternary structure, the glycine cleavage system is composed of four proteins: P, T, L and H. Requires (R)-lipoate as cofactor.

In terms of biological role, the glycine cleavage system catalyzes the degradation of glycine. The H protein shuttles the methylamine group of glycine from the P protein to the T protein. In Mycobacterium avium (strain 104), this protein is Glycine cleavage system H protein.